A 182-amino-acid polypeptide reads, in one-letter code: Large ribosomal subunit protein uL10 (182 aa).

Belongs to the universal ribosomal protein uL10 family. In terms of assembly, part of the ribosomal stalk of the 50S ribosomal subunit. The N-terminus interacts with L11 and the large rRNA to form the base of the stalk. The C-terminus forms an elongated spine to which L12 dimers bind in a sequential fashion forming a multimeric L10(L12)X complex.

In terms of biological role, forms part of the ribosomal stalk, playing a central role in the interaction of the ribosome with GTP-bound translation factors. This is Large ribosomal subunit protein uL10 from Koribacter versatilis (strain Ellin345).